The primary structure comprises 706 residues: Double-strand break repair protein MRE11 (706 aa).

N-acetylserine is present on serine 2. The residue at position 2 (serine 2) is a Phosphoserine. Residues aspartate 20, histidine 22, and aspartate 60 each coordinate Mn(2+). Residues arginine 87–asparagine 117 form an interaction with NBN region. A Mn(2+)-binding site is contributed by asparagine 128. Residue histidine 129 is the Proton donor of the active site. Positions 217, 245, and 247 each coordinate Mn(2+). Lysine 255 is covalently cross-linked (Glycyl lysine isopeptide (Lys-Gly) (interchain with G-Cter in SUMO2)). A Phosphoserine modification is found at serine 275. Lysine 282 participates in a covalent cross-link: Glycyl lysine isopeptide (Lys-Gly) (interchain with G-Cter in UFM1). Lysine 339 participates in a covalent cross-link: Glycyl lysine isopeptide (Lys-Gly) (interchain with G-Cter in ubiquitin). Glycyl lysine isopeptide (Lys-Gly) (interchain with G-Cter in SUMO) cross-links involve residues lysine 384 and lysine 468. A Glycyl lysine isopeptide (Lys-Gly) (interchain with G-Cter in ubiquitin) cross-link involves residue lysine 481. The span at phenylalanine 505–asparagine 514 shows a compositional bias: basic and acidic residues. Residues phenylalanine 505–arginine 706 form a disordered region. Over residues arginine 531–phenylalanine 541 the composition is skewed to polar residues. Residues glycine 569–alanine 579 show a composition bias toward basic residues. Asymmetric dimethylarginine is present on residues arginine 570, arginine 572, arginine 574, arginine 576, arginine 577, arginine 580, arginine 587, arginine 592, and arginine 594. The GAR signature appears at arginine 570 to arginine 594. The span at arginine 580–glycine 589 shows a compositional bias: low complexity. Residues arginine 603–methionine 617 are compositionally biased toward polar residues. A phosphoserine mark is found at serine 618, serine 640, and serine 648. Residues isoleucine 643 to isoleucine 653 are compositionally biased toward acidic residues. Polar residues predominate over residues proline 655–alanine 679. Residue lysine 671 is modified to N6-lactoyllysine. A phosphoserine mark is found at serine 674, serine 676, serine 686, and serine 699. The segment covering phenylalanine 684–proline 694 has biased composition (acidic residues).

Belongs to the MRE11/RAD32 family. As to quaternary structure, component of the MRN complex composed of two heterodimers RAD50 and MRE11 associated with a single NBN. The MRN complexes dimerize on DNA to form joined MRN-MRN oligomers required for DNA double-strand break repair. As part of the MRN complex, interacts with MCM9; the interaction recruits the complex to DNA repair sites. Component of the BASC complex, at least composed of BRCA1, MSH2, MSH6, MLH1, ATM, BLM, RAD50, MRE11 and NBN. Found in a complex with TERF2. Interacts with DCLRE1C/Artemis and DCLRE1B/Apollo. Interacts with ATF2. Interacts with EXD2. Interacts with MRNIP. Interacts with SAMHD1; leading to stimulate 3'-5' exonuclease activity. Interacts (when ubiquitinated) with UBQLN4 (via its UBA domain). Interacts with CYREN (via XLF motif). Interacts with GFI1; promoting methylation by PRMT1. Interacts with DYNLL1; inhibiting the activity of MRE11. Interacts with C1QBP and RAD50; interaction takes place in absence of DNA damage to form the MRC (MRE11-RAD50-C1QBP) complex that inhibits the activity of MRE11. Interacts with AGER/RAGE; AGER is recruited to DNA double-strand break sites where it enhances MRE11 endonuclease activity to promote DNA repair. The cofactor is Mn(2+). Phosphorylated by ATM at Ser-674 and Ser-676 in response to DNA damage, promoting MRE11 activity: phosphorylation activates MRE11 by preventing the interaction between MRE11 and the C1QBP inhibitor. Phosphorylation at Ser-648 by PLK1 primes for phosphorylation at Ser-686 by CK2, inhibiting recruitment of the MRN complex to DNA damage sites. Post-translationally, asymmetric dimethylation by PRMT1 promotes MRE11 exonuclease activity. In terms of processing, lactylation at Lys-671 by CREBBP/CBP in response to DNA damage promotes DNA binding and MRE11 activity. Acetylated on lysine residues by KAT2A /GCN5. Post-translationally, ubiquitinated following DNA damage. Ubiquitination triggers interaction with UBQLN4, leading to MRE11 removal from chromatin and degradation by the proteasome. Ubiquitinated at Lys-339 and Lys-481 by RNF126 via 'Lys-27'- and 'Lys-29'-linked polyubiquitin chains, promoting the exonuclease activity of MRE11. In terms of processing, SUMOylated by PIAS1, stabilizing MRE11 on chromatin during end resection. DeSUMOylated by SENP3 following removal from DNA double-strand breaks (DSBs). Ufmylation at Lys-282 promotes MRE11 activity and is required for activation of the ATM and ATR kinases by the MRN complex.

It is found in the nucleus. The protein localises to the chromosome. The protein resides in the telomere. With respect to regulation, interaction with SAMHD1 stimulates the double-strand-specific 3'-5' exonuclease activity. RBBP8/CtIP specifically promotes the endonuclease activity to clear protein-DNA adducts and generate clean double-strand break ends. DYNLL1-binding inhibits the activity of MRE11. MRE11 activity is inhibited by C1QBP: in absence of DNA damage, C1QBP interacts with unphosphorylated MRE11, preventing formation and activity of the MRN complex. In terms of biological role, core component of the MRN complex, which plays a central role in double-strand break (DSB) repair, DNA recombination, maintenance of telomere integrity and meiosis. The MRN complex is involved in the repair of DNA double-strand breaks (DSBs) via homologous recombination (HR), an error-free mechanism which primarily occurs during S and G2 phases. The complex (1) mediates the end resection of damaged DNA, which generates proper single-stranded DNA, a key initial steps in HR, and is (2) required for the recruitment of other repair factors and efficient activation of ATM and ATR upon DNA damage. Within the MRN complex, MRE11 possesses both single-strand endonuclease activity and double-strand-specific 3'-5' exonuclease activity. After DSBs, MRE11 is loaded onto DSBs sites and cleaves DNA by cooperating with RBBP8/CtIP to initiate end resection. MRE11 first endonucleolytically cleaves the 5' strand at DNA DSB ends to prevent non-homologous end joining (NHEJ) and licence HR. It then generates a single-stranded DNA gap via 3' to 5' exonucleolytic degradation to create entry sites for EXO1- and DNA2-mediated 5' to 3' long-range resection, which is required for single-strand invasion and recombination. RBBP8/CtIP specifically promotes the endonuclease activity of MRE11 to clear protein-DNA adducts and generate clean double-strand break ends. MRE11 endonuclease activity is also enhanced by AGER/RAGE. The MRN complex is also required for DNA damage signaling via activation of the ATM and ATR kinases: the nuclease activity of MRE11 is not required to activate ATM and ATR. The MRN complex is also required for the processing of R-loops. The MRN complex is involved in the activation of the cGAS-STING pathway induced by DNA damage during tumorigenesis: the MRN complex acts by displacing CGAS from nucleosome sequestration, thereby activating it. In telomeres the MRN complex may modulate t-loop formation. This chain is Double-strand break repair protein MRE11, found in Mus musculus (Mouse).